Here is an 807-residue protein sequence, read N- to C-terminus: AP-5 complex subunit zeta-1 (807 aa).

Probably part of the adaptor protein complex 5 (AP-5) a tetramer composed of AP5B1, AP5M1, AP5S1 and AP5Z1. Interacts with ZFYVE26 and SPG11.

The protein localises to the cytoplasm. It localises to the nucleus. As part of AP-5, a probable fifth adaptor protein complex it may be involved in endosomal transport. According to PubMed:20613862 it is a putative helicase required for efficient homologous recombination DNA double-strand break repair. The chain is AP-5 complex subunit zeta-1 (AP5Z1) from Homo sapiens (Human).